We begin with the raw amino-acid sequence, 321 residues long: Glucokinase (321 aa).

8-13 (GDVGGT) provides a ligand contact to ATP.

Belongs to the bacterial glucokinase family.

It localises to the cytoplasm. The catalysed reaction is D-glucose + ATP = D-glucose 6-phosphate + ADP + H(+). This Klebsiella pneumoniae subsp. pneumoniae (strain ATCC 700721 / MGH 78578) protein is Glucokinase.